Consider the following 156-residue polypeptide: Small ribosomal subunit protein uS7 (156 aa).

This sequence belongs to the universal ribosomal protein uS7 family. In terms of assembly, part of the 30S ribosomal subunit. Contacts proteins S9 and S11.

Its function is as follows. One of the primary rRNA binding proteins, it binds directly to 16S rRNA where it nucleates assembly of the head domain of the 30S subunit. Is located at the subunit interface close to the decoding center, probably blocks exit of the E-site tRNA. The chain is Small ribosomal subunit protein uS7 from Klebsiella pneumoniae (strain 342).